A 739-amino-acid polypeptide reads, in one-letter code: Vascular cell adhesion protein 1 (739 aa).

An N-terminal signal peptide occupies residues 1–24 (MPRKMVVIFGASNILWMVFAVSQA). 7 consecutive Ig-like C2-type domains span residues 25–105 (SKME…KKLE), 109–212 (QVEI…KERE), 223–309 (PRNT…LIVQ), 312–399 (PFTV…IKVD), 408–506 (EVEM…QTLY), 511–595 (PRDT…VELI), and 600–684 (PKDI…LTLD). The Extracellular portion of the chain corresponds to 25 to 698 (SKMEIFLEPR…ENNKDYFSPE (674 aa)). 5 disulfides stabilise this stretch: C47-C95, C52-C99, C137-C195, C246-C291, and C335-C383. N-linked (GlcNAc...) asparagine glycosylation is found at N76 and N77. The N-linked (GlcNAc...) asparagine glycan is linked to N273. N531 carries an N-linked (GlcNAc...) asparagine glycan. C534 and C579 are oxidised to a cystine. Residues 699–720 (LLVLYCASSLIIPAIGMIIYFA) traverse the membrane as a helical segment. The Cytoplasmic segment spans residues 721–739 (RRANMKGSYSLVEAQKSKV).

Cleaved by the metalloproteinase ADAM17 to generate the soluble form. In terms of processing, sialoglycoprotein. Post-translationally, ubiquitinated by TRIM65 via 'Lys-48'-linked ubiquitination; leading to proteasomal degradation.

Its subcellular location is the cell membrane. The protein resides in the secreted. Functionally, cell adhesion glycoprotein predominantly expressed on the surface of endothelial cells that plays an important role in immune surveillance and inflammation. Acts as a major regulator of leukocyte adhesion to the endothelium through interaction with different types of integrins. During inflammatory responses, binds ligands on the surface of activated endothelial cells to initiate the activation of calcium channels and the plasma membrane-associated small GTPase RAC1 leading to leukocyte transendothelial migration. Also serves as a quality-control checkpoint for entry into bone marrow by providing a 'don't-eat-me' stamping in the context of major histocompatibility complex (MHC) class-I presentation. This is Vascular cell adhesion protein 1 (VCAM1) from Canis lupus familiaris (Dog).